The chain runs to 335 residues: Probable BOI-related E3 ubiquitin-protein ligase 3 (335 aa).

The segment at 196–232 (LEEKVKSLCVENQIWRDVAQSNEATVNALRSNLQQVL) is WRD domain. An RING-type zinc finger spans residues 287-322 (CRSCGKGEASVLLLPCRHMCLCSVCGSSLNTCPICK).

As to quaternary structure, interacts with the DELLA proteins GAI, RGA, RGL1, RGL2 and RGL3.

It catalyses the reaction S-ubiquitinyl-[E2 ubiquitin-conjugating enzyme]-L-cysteine + [acceptor protein]-L-lysine = [E2 ubiquitin-conjugating enzyme]-L-cysteine + N(6)-ubiquitinyl-[acceptor protein]-L-lysine.. Its pathway is protein degradation; proteasomal ubiquitin-dependent pathway. In terms of biological role, probable E3 ubiquitin-protein ligase. Has no effect on the stability of the DELLA proteins. This is Probable BOI-related E3 ubiquitin-protein ligase 3 (BRG3) from Arabidopsis thaliana (Mouse-ear cress).